The primary structure comprises 87 residues: Small ribosomal subunit protein bS20 (87 aa).

Belongs to the bacterial ribosomal protein bS20 family.

Binds directly to 16S ribosomal RNA. The protein is Small ribosomal subunit protein bS20 of Lachnoclostridium phytofermentans (strain ATCC 700394 / DSM 18823 / ISDg) (Clostridium phytofermentans).